The primary structure comprises 545 residues: Chaperonin GroEL (545 aa).

ATP-binding positions include 29–32 (TLGP), lysine 50, 86–90 (DGTTT), glycine 415, and aspartate 495.

Belongs to the chaperonin (HSP60) family. As to quaternary structure, forms a cylinder of 14 subunits composed of two heptameric rings stacked back-to-back. Interacts with the co-chaperonin GroES.

It localises to the cytoplasm. The enzyme catalyses ATP + H2O + a folded polypeptide = ADP + phosphate + an unfolded polypeptide.. In terms of biological role, together with its co-chaperonin GroES, plays an essential role in assisting protein folding. The GroEL-GroES system forms a nano-cage that allows encapsulation of the non-native substrate proteins and provides a physical environment optimized to promote and accelerate protein folding. This chain is Chaperonin GroEL, found in Bacteroides fragilis (strain ATCC 25285 / DSM 2151 / CCUG 4856 / JCM 11019 / LMG 10263 / NCTC 9343 / Onslow / VPI 2553 / EN-2).